The sequence spans 370 residues: Chloromuconate cycloisomerase (370 aa).

The active-site Proton acceptor is lysine 165. Mn(2+) is bound by residues aspartate 194, glutamate 220, and aspartate 245. Glutamate 323 serves as the catalytic Proton donor.

Belongs to the mandelate racemase/muconate lactonizing enzyme family. Mn(2+) is required as a cofactor.

It catalyses the reaction 2-[(2R)-2-chloro-2,5-dihydro-5-oxofuryl]acetate = 3-chloro-cis,cis-muconate + H(+). Its pathway is aromatic compound metabolism; 3-chlorocatechol degradation. The polypeptide is Chloromuconate cycloisomerase (tcbD) (Pseudomonas sp. (strain P51)).